A 387-amino-acid chain; its full sequence is Protein RecA, chromosomal (387 aa).

ATP is bound at residue 80–87 (GPESSGKT). Residues 352–387 (EVAETTEDTSTKAKATKAKKEEKVVETEEIELELED) form a disordered region. A compositionally biased stretch (acidic residues) spans 378 to 387 (TEEIELELED).

The protein belongs to the RecA family.

It localises to the cytoplasm. Its function is as follows. Can catalyze the hydrolysis of ATP in the presence of single-stranded DNA, the ATP-dependent uptake of single-stranded DNA by duplex DNA, and the ATP-dependent hybridization of homologous single-stranded DNAs. It interacts with LexA causing its activation and leading to its autocatalytic cleavage. In Lactococcus lactis subsp. lactis (strain IL1403) (Streptococcus lactis), this protein is Protein RecA, chromosomal.